A 364-amino-acid polypeptide reads, in one-letter code: 3-isopropylmalate dehydrogenase (364 aa).

Position 79 to 92 (glycine 79 to glutamate 92) interacts with NAD(+). Substrate is bound by residues arginine 100, arginine 110, arginine 139, and aspartate 228. Residues aspartate 228, aspartate 252, and aspartate 256 each contribute to the Mg(2+) site. Glycine 286–asparagine 298 serves as a coordination point for NAD(+).

This sequence belongs to the isocitrate and isopropylmalate dehydrogenases family. LeuB type 1 subfamily. In terms of assembly, homodimer. Requires Mg(2+) as cofactor. Mn(2+) is required as a cofactor.

The protein resides in the cytoplasm. The catalysed reaction is (2R,3S)-3-isopropylmalate + NAD(+) = 4-methyl-2-oxopentanoate + CO2 + NADH. It participates in amino-acid biosynthesis; L-leucine biosynthesis; L-leucine from 3-methyl-2-oxobutanoate: step 3/4. Its function is as follows. Catalyzes the oxidation of 3-carboxy-2-hydroxy-4-methylpentanoate (3-isopropylmalate) to 3-carboxy-4-methyl-2-oxopentanoate. The product decarboxylates to 4-methyl-2 oxopentanoate. The sequence is that of 3-isopropylmalate dehydrogenase from Sodalis glossinidius (strain morsitans).